The following is a 214-amino-acid chain: NADH-ubiquinone oxidoreductase chain 5 (214 aa).

4 helical membrane-spanning segments follow: residues 14-34, 58-78, 92-112, and 192-212; these read LNTW…TYSI, PLIT…GMII, MPLI…ILAL, and TGLI…MILM.

The protein belongs to the complex I subunit 5 family.

Its subcellular location is the mitochondrion inner membrane. It catalyses the reaction a ubiquinone + NADH + 5 H(+)(in) = a ubiquinol + NAD(+) + 4 H(+)(out). In terms of biological role, core subunit of the mitochondrial membrane respiratory chain NADH dehydrogenase (Complex I) that is believed to belong to the minimal assembly required for catalysis. Complex I functions in the transfer of electrons from NADH to the respiratory chain. The immediate electron acceptor for the enzyme is believed to be ubiquinone. This Anser caerulescens (Snow goose) protein is NADH-ubiquinone oxidoreductase chain 5 (MT-ND5).